A 93-amino-acid chain; its full sequence is UPF0728 protein C10orf53 homolog (93 aa).

Belongs to the UPF0728 family.

The protein is UPF0728 protein C10orf53 homolog of Mus musculus (Mouse).